We begin with the raw amino-acid sequence, 192 residues long: Superoxide dismutase [Fe] (192 aa).

Positions 27, 74, 157, and 161 each coordinate Fe cation.

The protein belongs to the iron/manganese superoxide dismutase family. As to quaternary structure, homodimer. Requires Fe cation as cofactor.

The catalysed reaction is 2 superoxide + 2 H(+) = H2O2 + O2. Functionally, destroys superoxide anion radicals which are normally produced within the cells and which are toxic to biological systems. The sequence is that of Superoxide dismutase [Fe] (sodB) from Bordetella pertussis (strain Tohama I / ATCC BAA-589 / NCTC 13251).